Here is a 356-residue protein sequence, read N- to C-terminus: Glutenin, low molecular weight subunit (356 aa).

Positions 1-19 (MKTFLVFALLALAAASAVA) are cleaved as a signal peptide. The disordered stretch occupies residues 20-179 (QISQQQQAPP…LQQQRPPFSR (160 aa)).

This sequence belongs to the gliadin/glutenin family. In terms of assembly, disulfide-bridge linked aggregates.

Its function is as follows. Glutenins are high-molecular weight seed storage proteins of wheat endosperm. Thought to be responsible for the visco-elastic property of wheat dough. The protein is Glutenin, low molecular weight subunit of Triticum aestivum (Wheat).